Here is a 65-residue protein sequence, read N- to C-terminus: uncharacterized protein (65 aa).

This sequence to E.coli YjiX.

This is an uncharacterized protein from Escherichia coli O6:H1 (strain CFT073 / ATCC 700928 / UPEC).